The following is a 251-amino-acid chain: Triosephosphate isomerase (251 aa).

Residue 9–11 participates in substrate binding; it reads NWK. The Electrophile role is filled by histidine 95. The active-site Proton acceptor is glutamate 167. Residues glycine 173, serine 213, and 234 to 235 each bind substrate; that span reads GG. Serine 213 carries the post-translational modification Phosphoserine.

This sequence belongs to the triosephosphate isomerase family. As to quaternary structure, homodimer.

It is found in the cytoplasm. The enzyme catalyses D-glyceraldehyde 3-phosphate = dihydroxyacetone phosphate. It participates in carbohydrate biosynthesis; gluconeogenesis. Its pathway is carbohydrate degradation; glycolysis; D-glyceraldehyde 3-phosphate from glycerone phosphate: step 1/1. Its function is as follows. Involved in the gluconeogenesis. Catalyzes stereospecifically the conversion of dihydroxyacetone phosphate (DHAP) to D-glyceraldehyde-3-phosphate (G3P). This chain is Triosephosphate isomerase, found in Bacillus cereus (strain ATCC 10987 / NRS 248).